The following is a 35-amino-acid chain: ANKRPIWIMGHMVNAIYQIDEFVNLGANSIETDVS.

Histidine 11 is a catalytic residue. Positions 31 and 33 each coordinate Mg(2+).

This sequence belongs to the arthropod phospholipase D family. Class I subfamily. Mg(2+) serves as cofactor. In terms of processing, contains 1 disulfide bond. Expressed by the venom gland.

The protein localises to the secreted. The catalysed reaction is an N-(acyl)-sphingosylphosphocholine = an N-(acyl)-sphingosyl-1,3-cyclic phosphate + choline. The enzyme catalyses an N-(acyl)-sphingosylphosphoethanolamine = an N-(acyl)-sphingosyl-1,3-cyclic phosphate + ethanolamine. It catalyses the reaction a 1-acyl-sn-glycero-3-phosphocholine = a 1-acyl-sn-glycero-2,3-cyclic phosphate + choline. It carries out the reaction a 1-acyl-sn-glycero-3-phosphoethanolamine = a 1-acyl-sn-glycero-2,3-cyclic phosphate + ethanolamine. In terms of biological role, dermonecrotic toxins cleave the phosphodiester linkage between the phosphate and headgroup of certain phospholipids (sphingolipid and lysolipid substrates), forming an alcohol (often choline) and a cyclic phosphate. This toxin acts on sphingomyelin (SM). It may also act on ceramide phosphoethanolamine (CPE), lysophosphatidylcholine (LPC) and lysophosphatidylethanolamine (LPE), but not on lysophosphatidylserine (LPS), and lysophosphatidylglycerol (LPG). It acts by transphosphatidylation, releasing exclusively cyclic phosphate products as second products. Induces dermonecrosis, hemolysis, increased vascular permeability, edema, inflammatory response, and platelet aggregation. This chain is Dermonecrotic toxin LdSicTox-alpha-1, found in Loxosceles deserta (Desert recluse spider).